Reading from the N-terminus, the 334-residue chain is Methionyl-tRNA formyltransferase (334 aa).

Serine 111 to proline 114 is a binding site for (6S)-5,6,7,8-tetrahydrofolate.

Belongs to the Fmt family.

The catalysed reaction is L-methionyl-tRNA(fMet) + (6R)-10-formyltetrahydrofolate = N-formyl-L-methionyl-tRNA(fMet) + (6S)-5,6,7,8-tetrahydrofolate + H(+). Attaches a formyl group to the free amino group of methionyl-tRNA(fMet). The formyl group appears to play a dual role in the initiator identity of N-formylmethionyl-tRNA by promoting its recognition by IF2 and preventing the misappropriation of this tRNA by the elongation apparatus. In Cyanothece sp. (strain PCC 7425 / ATCC 29141), this protein is Methionyl-tRNA formyltransferase.